Here is a 513-residue protein sequence, read N- to C-terminus: 2-isopropylmalate synthase (513 aa).

The Pyruvate carboxyltransferase domain occupies 5–268 (LIIFDTTLRD…DVGVDTTQIV (264 aa)). Residues D14, H202, H204, and N239 each contribute to the Mn(2+) site. A regulatory domain region spans residues 394 to 513 (RFVSLSQRSE…KSSEKLNPQI (120 aa)).

This sequence belongs to the alpha-IPM synthase/homocitrate synthase family. LeuA type 1 subfamily. As to quaternary structure, homodimer. The cofactor is Mn(2+).

It localises to the cytoplasm. It catalyses the reaction 3-methyl-2-oxobutanoate + acetyl-CoA + H2O = (2S)-2-isopropylmalate + CoA + H(+). It participates in amino-acid biosynthesis; L-leucine biosynthesis; L-leucine from 3-methyl-2-oxobutanoate: step 1/4. In terms of biological role, catalyzes the condensation of the acetyl group of acetyl-CoA with 3-methyl-2-oxobutanoate (2-ketoisovalerate) to form 3-carboxy-3-hydroxy-4-methylpentanoate (2-isopropylmalate). The chain is 2-isopropylmalate synthase from Ralstonia nicotianae (strain ATCC BAA-1114 / GMI1000) (Ralstonia solanacearum).